A 200-amino-acid polypeptide reads, in one-letter code: Glycerol-3-phosphate acyltransferase (200 aa).

The next 5 helical transmembrane spans lie at 2-22 (FNISAVAVSYLIGSLSFAVIV), 51-71 (KAAALTLLGDAAKGLVAVLLA), 84-104 (AIAAVALAALVGHMWPVFFGF), 114-134 (LGVLLALSPATALVCALIWLV), and 159-179 (FFMPHTSWIWATLLIALLVLF).

Belongs to the PlsY family. As to quaternary structure, probably interacts with PlsX.

It localises to the cell inner membrane. It carries out the reaction an acyl phosphate + sn-glycerol 3-phosphate = a 1-acyl-sn-glycero-3-phosphate + phosphate. It functions in the pathway lipid metabolism; phospholipid metabolism. In terms of biological role, catalyzes the transfer of an acyl group from acyl-phosphate (acyl-PO(4)) to glycerol-3-phosphate (G3P) to form lysophosphatidic acid (LPA). This enzyme utilizes acyl-phosphate as fatty acyl donor, but not acyl-CoA or acyl-ACP. This Neisseria meningitidis serogroup C (strain 053442) protein is Glycerol-3-phosphate acyltransferase.